Here is a 265-residue protein sequence, read N- to C-terminus: Orotidine 5'-phosphate decarboxylase (265 aa).

Residues Asp-37, 59 to 61 (KTH), 91 to 100 (DRKFADIGNT), Tyr-217, and Arg-236 contribute to the substrate site. Lys-93 functions as the Proton donor in the catalytic mechanism.

This sequence belongs to the OMP decarboxylase family.

The enzyme catalyses orotidine 5'-phosphate + H(+) = UMP + CO2. Its pathway is pyrimidine metabolism; UMP biosynthesis via de novo pathway; UMP from orotate: step 2/2. The chain is Orotidine 5'-phosphate decarboxylase (URA3) from Saccharomycopsis fibuligera (Yeast).